The following is a 348-amino-acid chain: CCAAT/enhancer-binding protein beta (348 aa).

Residues 1 to 24 (MQRLVVWDPVCLPLPPPPPAFKSM) form a required for Lys-174 sumoylation region. R3 carries the asymmetric dimethylarginine; by CARM1 modification. A required for MYC transcriptional repression region spans residues 24–135 (MEVANFYYEA…YGGKNCKKAA (112 aa)). K43 carries the post-translational modification N6-acetyllysine; alternate. K43 bears the N6-methylated lysine; alternate mark. Disordered stretches follow at residues 44–65 (AAPAAPPADRPGPRPPTGELGS) and 79–112 (LEPLGAPQAPAPTTASDTFEAAPSAPAPVPASSG). Positions 47–59 (AAPPADRPGPRPP) are enriched in pro residues. The 9aaTAD motif lies at 116–124 (DFLSDLFSD). N6-acetyllysine; by KAT2A and KAT2B occurs at positions 129 and 132. Residue K133 is modified to N6-acetyllysine; by KAT2A and KAT2B; alternate. K133 participates in a covalent cross-link: Glycyl lysine isopeptide (Lys-Gly) (interchain with G-Cter in SUMO2); alternate. Residues 158–178 (APLHPPPPPPPPPAELKAEPG) form a disordered region. Positions 160-171 (LHPPPPPPPPPA) are enriched in pro residues. A Glycyl lysine isopeptide (Lys-Gly) (interchain with G-Cter in SUMO2); alternate cross-link involves residue K174. Residue K174 forms a Glycyl lysine isopeptide (Lys-Gly) (interchain with G-Cter in SUMO); alternate linkage. Residues K185 and K187 each participate in a glycyl lysine isopeptide (Lys-Gly) (interchain with G-Cter in SUMO2) cross-link. Positions 219 to 259 (SGSSGSLSTSSSSSPPGTPSPADAKATPAAAACYAGAAPAP) are enriched in low complexity. The segment at 219–277 (SGSSGSLSTSSSSSPPGTPSPADAKATPAAAACYAGAAPAPSQVKSKAKKTVDKHSDEY) is disordered. Phosphothreonine; by GSK3-beta is present on T227. Residues S228 and S229 are each glycosylated (O-linked (GlcNAc) serine). S232 is subject to Phosphoserine; by GSK3-beta. T236 is modified (phosphothreonine; by RPS6KA1, CDK2 and MAPK). Residues K263 and K265 each participate in a glycyl lysine isopeptide (Lys-Gly) (interchain with G-Cter in SUMO2) cross-link. The span at 268 to 277 (KTVDKHSDEY) shows a compositional bias: basic and acidic residues. The residue at position 269 (T269) is a Phosphothreonine; by RPS6KA1 and PKC/PRKCA. The region spanning 274-337 (SDEYKIRRER…STLRNLFKTL (64 aa)) is the bZIP domain. The basic motif stretch occupies residues 278-298 (KIRRERNNIAVRKSRDKAKMR). S291 carries the phosphoserine; by PKC/PRKCA modification. Residues 300–307 (LETQHKVL) form a leucine-zipper region. S328 is subject to Phosphoserine; by CaMK2. K335 participates in a covalent cross-link: Glycyl lysine isopeptide (Lys-Gly) (interchain with G-Cter in SUMO2).

It belongs to the bZIP family. C/EBP subfamily. As to quaternary structure, binds DNA as a homodimer and as a heterodimer. Interacts with ATF4. Binds DNA as a heterodimer with ATF4. Interacts with MYB; within the complex, MYB and CEBPB bind to different promoter regions. Can form stable heterodimers with CEBPA, CEBPD and CEBPG. Interacts with SIX1. Interacts with TRIM28 and PTGES2. Interacts with PRDM16. Interacts with CCDC85B. Forms a complex with THOC5. Interacts with ZNF638; this interaction increases transcriptional activation. Interacts with CIDEA and CIDEC; these interactions increase transcriptional activation of a subset of CEBPB downstream target genes. Interacts with DDIT3/CHOP. Interacts with EP300; recruits EP300 to chromatin. Interacts with RORA; the interaction disrupts interaction with EP300. Interacts (not methylated) with MED23, MED26, SMARCA2, SMARCB1 and SMARCC1. Interacts with KAT2A and KAT2B. Interacts with ATF5; EP300 is required for ATF5 and CEBPB interaction and DNA binding. Interacts with NFE2L1; the heterodimer represses expression of DSPP during odontoblast differentiation. Post-translationally, methylated. Methylation at Arg-3 by CARM1 and at Lys-43 by EHMT2 inhibit transactivation activity. Methylation is probably inhibited by phosphorylation at Thr-236. In terms of processing, sumoylated by polymeric chains of SUMO2 or SUMO3. Sumoylation at Lys-174 is required for inhibition of T-cells proliferation. In adipocytes, sumoylation at Lys-174 by PIAS1 leads to ubiquitination and subsequent proteasomal degradation. Desumoylated by SENP2, which abolishes ubiquitination and stabilizes protein levels. Ubiquitinated, leading to proteasomal degradation. Post-translationally, phosphorylated at Thr-236 by MAPK and CDK2, serves to prime phosphorylation at Thr-227 and Ser-232 by GSK3B and acquire DNA-binding as well as transactivation activities, required to induce adipogenesis. MAPK and CDK2 act sequentially to maintain Thr-236 in the primed phosphorylated state during mitotical cloning expansion and thereby progression of terminal differentiation. Phosphorylation at Thr-269 enhances transactivation activity. Phosphorylation at Ser-328 in response to calcium increases transactivation activity. Phosphorylated at Thr-236 by RPS6KA1. In terms of processing, O-glycosylated, glycosylation at Ser-228 and Ser-229 prevents phosphorylation on Thr-236, Ser-232 and Thr-227 and DNA binding activity which delays the adipocyte differentiation program. Acetylated. Acetylation at Lys-43 is an important and dynamic regulatory event that contributes to its ability to transactivate target genes, including those associated with adipogenesis and adipocyte function. Deacetylation by HDAC1 represses its transactivation activity. Acetylated by KAT2A and KAT2B within a cluster of lysine residues between amino acids 129-133, this acetylation is strongly induced by glucocorticoid treatment and enhances transactivation activity.

Its subcellular location is the nucleus. It is found in the cytoplasm. Important transcription factor regulating the expression of genes involved in immune and inflammatory responses. Also plays a significant role in adipogenesis, as well as in the gluconeogenic pathway, liver regeneration, and hematopoiesis. The consensus recognition site is 5'-T[TG]NNGNAA[TG]-3'. Its functional capacity is governed by protein interactions and post-translational protein modifications. During early embryogenesis, plays essential and redundant roles with CEBPA. Has a promitotic effect on many cell types such as hepatocytes and adipocytes but has an antiproliferative effect on T-cells by repressing MYC expression, facilitating differentiation along the T-helper 2 lineage. Binds to regulatory regions of several acute-phase and cytokines genes and plays a role in the regulation of acute-phase reaction and inflammation. Also plays a role in intracellular bacteria killing. During adipogenesis, is rapidly expressed and, after activation by phosphorylation, induces CEBPA and PPARG, which turn on the series of adipocyte genes that give rise to the adipocyte phenotype. The delayed transactivation of the CEBPA and PPARG genes by CEBPB appears necessary to allow mitotic clonal expansion and thereby progression of terminal differentiation. Essential for female reproduction because of a critical role in ovarian follicle development. Restricts osteoclastogenesis: together with NFE2L1; represses expression of DSPP during odontoblast differentiation. This chain is CCAAT/enhancer-binding protein beta (CEBPB), found in Bos taurus (Bovine).